The primary structure comprises 530 residues: Bifunctional purine biosynthesis protein PurH (530 aa).

An MGS-like domain is found at 1-147 (MPSIKRALIS…KNWKHVAIVT (147 aa)).

Belongs to the PurH family.

The catalysed reaction is (6R)-10-formyltetrahydrofolate + 5-amino-1-(5-phospho-beta-D-ribosyl)imidazole-4-carboxamide = 5-formamido-1-(5-phospho-D-ribosyl)imidazole-4-carboxamide + (6S)-5,6,7,8-tetrahydrofolate. The enzyme catalyses IMP + H2O = 5-formamido-1-(5-phospho-D-ribosyl)imidazole-4-carboxamide. The protein operates within purine metabolism; IMP biosynthesis via de novo pathway; 5-formamido-1-(5-phospho-D-ribosyl)imidazole-4-carboxamide from 5-amino-1-(5-phospho-D-ribosyl)imidazole-4-carboxamide (10-formyl THF route): step 1/1. It functions in the pathway purine metabolism; IMP biosynthesis via de novo pathway; IMP from 5-formamido-1-(5-phospho-D-ribosyl)imidazole-4-carboxamide: step 1/1. This is Bifunctional purine biosynthesis protein PurH from Neisseria meningitidis serogroup A / serotype 4A (strain DSM 15465 / Z2491).